The chain runs to 280 residues: 2-dehydro-3-deoxyphosphooctonate aldolase (280 aa).

It belongs to the KdsA family.

The protein localises to the cytoplasm. The enzyme catalyses D-arabinose 5-phosphate + phosphoenolpyruvate + H2O = 3-deoxy-alpha-D-manno-2-octulosonate-8-phosphate + phosphate. It functions in the pathway carbohydrate biosynthesis; 3-deoxy-D-manno-octulosonate biosynthesis; 3-deoxy-D-manno-octulosonate from D-ribulose 5-phosphate: step 2/3. The protein operates within bacterial outer membrane biogenesis; lipopolysaccharide biosynthesis. The protein is 2-dehydro-3-deoxyphosphooctonate aldolase of Neisseria meningitidis serogroup C / serotype 2a (strain ATCC 700532 / DSM 15464 / FAM18).